A 222-amino-acid chain; its full sequence is UPF0758 protein HSM_0009 (222 aa).

An MPN domain is found at 99 to 222; that stretch reads QEFTSPDTVR…YFSFAEQGWI (124 aa). Positions 171, 173, and 184 each coordinate Zn(2+). The short motif at 171 to 184 is the JAMM motif element; sequence HNHPSGVSTPSMAD.

This sequence belongs to the UPF0758 family.

The sequence is that of UPF0758 protein HSM_0009 from Histophilus somni (strain 2336) (Haemophilus somnus).